The following is a 376-amino-acid chain: Probable plastid-lipid-associated protein 3, chloroplastic (376 aa).

The N-terminal 53 residues, Met1 to Arg53, are a transit peptide targeting the chloroplast. The interval Ser54–Val146 is disordered. Positions Pro85–Val96 are enriched in polar residues. Residues Met117–Asp126 are compositionally biased toward basic and acidic residues.

Belongs to the PAP/fibrillin family.

It is found in the plastid. The protein localises to the chloroplast. The protein resides in the plastoglobule. Functionally, probably involved in light/cold stress-related jasmonate (JA) biosynthesis. This chain is Probable plastid-lipid-associated protein 3, chloroplastic (PAP3), found in Arabidopsis thaliana (Mouse-ear cress).